Consider the following 414-residue polypeptide: MSHKIQGGSVVEMQGDEMTRIIWELIKEKLIFPYVDLDLHSYDLSIENRDATNDQVTKDAAEAIKKYNVGVKCATITPDEKRVEEFKLKQMWKSPNGTIRNILGGTVFREAIICKNIPRLVSGWVKPIIIGRHAYGDQYRATDFVVPGPGKVEICYTPSDGSPKTVYLVHNFTESGGVAMGMFNQDKSIEDFAHSSFQMALSKNWPLYLSTKNTILKKYDGRFKDIFQEIYDKQYKSQFEAQNIWYEHRLIDDMVAQAMKSEGGFIWACKNYDGDVQSDSVAQGYGSLGMMTSVLVCPDGKTVEAEAAHGTVTRHYRMYQKGQETSTNPIASIFAWTRGLAHRAKLDNNKELSFFAKALEEVCIETIEAGFMTKDLAACIKGLPNVQRSDYLNTFEFMDKLGENLQLKLAQAKL.

At serine 2 the chain carries N-acetylserine. Phosphotyrosine is present on tyrosine 42. An NADP(+)-binding site is contributed by 75–77; that stretch reads TIT. Threonine 77 provides a ligand contact to substrate. Lysine 81 carries the N6-acetyllysine modification. Position 82 (arginine 82) interacts with NADP(+). Substrate-binding positions include 94 to 100 and arginine 109; that span reads SPNGTIR. Lysine 126 bears the N6-succinyllysine mark. The substrate site is built by arginine 132 and lysine 212. Residues lysine 224 and lysine 233 each carry the N6-acetyllysine modification. Residue aspartate 252 coordinates Mn(2+). Lysine 260 provides a ligand contact to NADP(+). Mn(2+)-binding residues include aspartate 275 and aspartate 279. An NADP(+)-binding site is contributed by 310-315; it reads GTVTRH. Lysine 321 carries the post-translational modification N6-acetyllysine. Residue asparagine 328 coordinates NADP(+). Serine 389 bears the Phosphoserine mark. Lysine 400 carries the post-translational modification N6-succinyllysine.

This sequence belongs to the isocitrate and isopropylmalate dehydrogenases family. Homodimer. Mg(2+) serves as cofactor. The cofactor is Mn(2+). Acetylation at Lys-374 dramatically reduces catalytic activity.

The protein resides in the cytoplasm. The protein localises to the cytosol. It carries out the reaction D-threo-isocitrate + NADP(+) = 2-oxoglutarate + CO2 + NADPH. In terms of biological role, catalyzes the NADP(+)-dependent oxidative decarboxylation of isocitrate (D-threo-isocitrate) to 2-ketoglutarate (2-oxoglutarate), which is required by other enzymes such as the phytanoyl-CoA dioxygenase. Plays a critical role in the generation of NADPH, an important cofactor in many biosynthesis pathways. May act as a corneal epithelial crystallin and may be involved in maintaining corneal epithelial transparency. This is Isocitrate dehydrogenase [NADP] cytoplasmic (IDH1) from Ovis aries (Sheep).